Here is a 229-residue protein sequence, read N- to C-terminus: Ribonuclease 3 (229 aa).

Residues 5–127 (LDRLERKLGY…LIGAIYLDTG (123 aa)) enclose the RNase III domain. Glu-40 is a Mg(2+) binding site. Asp-44 is an active-site residue. Mg(2+)-binding residues include Asp-113 and Glu-116. Glu-116 is an active-site residue. One can recognise a DRBM domain in the interval 154–224 (DPKTRLQEFL…AAAALVALGV (71 aa)).

The protein belongs to the ribonuclease III family. In terms of assembly, homodimer. Requires Mg(2+) as cofactor.

The protein resides in the cytoplasm. The catalysed reaction is Endonucleolytic cleavage to 5'-phosphomonoester.. Functionally, digests double-stranded RNA. Involved in the processing of primary rRNA transcript to yield the immediate precursors to the large and small rRNAs (23S and 16S). Processes some mRNAs, and tRNAs when they are encoded in the rRNA operon. Processes pre-crRNA and tracrRNA of type II CRISPR loci if present in the organism. The sequence is that of Ribonuclease 3 from Pseudomonas aeruginosa (strain LESB58).